The primary structure comprises 584 residues: Putative sel1-like repeat-containing protein L18 (584 aa).

6 Sel1-like repeats span residues 132-167, 168-203, 204-237, 238-273, 274-309, and 316-351; these read SMAQ…DQNN, KYGL…CQNF, SKAQ…NQNH, SSAQ…SQGL, NSAK…YDDG, and EVAM…NTKN.

In Acanthamoeba polyphaga (Amoeba), this protein is Putative sel1-like repeat-containing protein L18.